Here is a 276-residue protein sequence, read N- to C-terminus: Small ribosomal subunit protein uS3 (276 aa).

The KH type-2 domain occupies 43 to 111; that stretch reads IRQLMSTGME…QVQLNILEVK (69 aa). Positions 218-227 are enriched in low complexity; the sequence is AQAASAPSRG. A disordered region spans residues 218-276; sequence AQAASAPSRGPRSDRGGRPGGADRGDRRRRNDRPAADAAPAAEAPAVEAAPAAAEGGQA. The segment covering 228–243 has biased composition (basic and acidic residues); that stretch reads PRSDRGGRPGGADRGD. A compositionally biased stretch (low complexity) spans 253 to 276; that stretch reads ADAAPAAEAPAVEAAPAAAEGGQA.

Belongs to the universal ribosomal protein uS3 family. In terms of assembly, part of the 30S ribosomal subunit. Forms a tight complex with proteins S10 and S14.

In terms of biological role, binds the lower part of the 30S subunit head. Binds mRNA in the 70S ribosome, positioning it for translation. The chain is Small ribosomal subunit protein uS3 from Pseudarthrobacter chlorophenolicus (strain ATCC 700700 / DSM 12829 / CIP 107037 / JCM 12360 / KCTC 9906 / NCIMB 13794 / A6) (Arthrobacter chlorophenolicus).